Consider the following 342-residue polypeptide: MEGLHIFNGFSGSSEARARHAAHQLGIPLHVADVTETFDEEIVQYLTREYLVARTPNPCVVCNRKIKFKTLLYYADRLACHFVATGHYARVFHNRQTGRYALLRGLDQAKDQSYFLFLLGQEQLSRILFPLGELTKKEVRSVALTMGVEAVREKESQEICFIPDDDYKTFIERHMGSSPAIPGDIVDRSGRLLGSHNGIHSFTIGQRKGLHIAAPRPYYVLAIDREKNRVVVGHEEEQGFSGLIVSGVSWIDGESPREEVFETLVRIRYRHRGVSSVVCPLSAGDEICPATGRPADHEEAGDKLIIRFQEPQRAVAPGQAAVFYSDDRVIGGGWIEQGIPLD.

Cysteine 62 serves as the catalytic Nucleophile. Cysteine 62 and cysteine 160 are joined by a disulfide. Glycine 86 serves as a coordination point for ATP. Residues 110 to 112 form an interaction with tRNA region; sequence KDQ. Cysteine 160 (cysteine persulfide intermediate) is an active-site residue. Residues 268 to 269 are interaction with tRNA; sequence RY.

This sequence belongs to the MnmA/TRMU family.

It is found in the cytoplasm. The enzyme catalyses S-sulfanyl-L-cysteinyl-[protein] + uridine(34) in tRNA + AH2 + ATP = 2-thiouridine(34) in tRNA + L-cysteinyl-[protein] + A + AMP + diphosphate + H(+). Its function is as follows. Catalyzes the 2-thiolation of uridine at the wobble position (U34) of tRNA, leading to the formation of s(2)U34. This chain is tRNA-specific 2-thiouridylase MnmA 2, found in Syntrophus aciditrophicus (strain SB).